We begin with the raw amino-acid sequence, 559 residues long: 5'-AMP-activated protein kinase catalytic subunit alpha-1 (559 aa).

Residues 27 to 279 (YILGDTLGVG…IKDIREHEWF (253 aa)) enclose the Protein kinase domain. Thr32 carries the phosphothreonine modification. ATP is bound by residues 33-41 (LGVGTFGKV) and Lys56. Asp150 functions as the Proton acceptor in the catalytic mechanism. At Thr183 the chain carries Phosphothreonine; by LKB1 and CaMKK2. Phosphothreonine is present on residues Thr269 and Thr355. Residues 302-381 (EALKEVCEKF…PERVPFLVAE (80 aa)) are AIS. Phosphoserine is present on Ser356. Phosphoserine; by ULK1 is present on Ser360. Thr368 is subject to Phosphothreonine; by ULK1. Thr382 carries the phosphothreonine modification. Residue Ser397 is modified to Phosphoserine; by ULK1. Phosphoserine is present on residues Ser467 and Ser486. The disordered stretch occupies residues 484 to 536 (AKSGTATPQRSGSISNYRSCQRSDSDAEAQGKPSEVSLTSSVTSLDSSPVDVA). Polar residues predominate over residues 485 to 505 (KSGTATPQRSGSISNYRSCQR). Phosphoserine; by ULK1 is present on Ser486. Thr488 is subject to Phosphothreonine; by ULK1. A Phosphothreonine modification is found at Thr490. 4 positions are modified to phosphoserine: Ser496, Ser508, Ser524, and Ser527. A compositionally biased stretch (low complexity) spans 516 to 535 (PSEVSLTSSVTSLDSSPVDV).

Belongs to the protein kinase superfamily. CAMK Ser/Thr protein kinase family. SNF1 subfamily. As to quaternary structure, AMPK is a heterotrimer of an alpha catalytic subunit (PRKAA1 or PRKAA2), a beta (PRKAB1 or PRKAB2) and a gamma non-catalytic subunits (PRKAG1, PRKAG2 or PRKAG3). Interacts with FNIP1 and FNIP2. Requires Mg(2+) as cofactor. Ubiquitinated. In terms of processing, phosphorylated at Thr-183 by STK11/LKB1 in complex with STE20-related adapter-alpha (STRADA) pseudo kinase and CAB39. Also phosphorylated at Thr-183 by CAMKK2; triggered by a rise in intracellular calcium ions, without detectable changes in the AMP/ATP ratio. CAMKK1 can also phosphorylate Thr-183, but at a much lower level. Dephosphorylated by protein phosphatase 2A and 2C (PP2A and PP2C). Phosphorylated by ULK1 and ULK2; leading to negatively regulate AMPK activity and suggesting the existence of a regulatory feedback loop between ULK1, ULK2 and AMPK. There is some ambiguity for some phosphosites: Ser-360/Thr-368 and Ser-486/Thr-488. Dephosphorylated by PPM1A and PPM1B. Post-translationally, glycosylated; O-GlcNAcylated by OGT, promoting the AMP-activated protein kinase (AMPK) activity. In terms of tissue distribution, low expression in kidney, liver, lung, heart and brain.

It localises to the cytoplasm. It is found in the nucleus. It carries out the reaction L-seryl-[protein] + ATP = O-phospho-L-seryl-[protein] + ADP + H(+). The enzyme catalyses L-threonyl-[protein] + ATP = O-phospho-L-threonyl-[protein] + ADP + H(+). It catalyses the reaction L-seryl-[acetyl-CoA carboxylase] + ATP = O-phospho-L-seryl-[acetyl-CoA carboxylase] + ADP + H(+). The catalysed reaction is L-seryl-[3-hydroxy-3-methylglutaryl-coenzyme A reductase] + ATP = O-phospho-L-seryl-[3-hydroxy-3-methylglutaryl-coenzyme A reductase] + ADP + H(+). It carries out the reaction L-seryl-[tau protein] + ATP = O-phospho-L-seryl-[tau protein] + ADP + H(+). The enzyme catalyses L-threonyl-[tau protein] + ATP = O-phospho-L-threonyl-[tau protein] + ADP + H(+). Activated by phosphorylation on Thr-183. Binding of AMP to non-catalytic gamma subunit (PRKAG1, PRKAG2 or PRKAG3) results in allosteric activation, inducing phosphorylation on Thr-183. AMP-binding to gamma subunit also sustains activity by preventing dephosphorylation of Thr-183. ADP also stimulates Thr-183 phosphorylation, without stimulating already phosphorylated AMPK. ATP promotes dephosphorylation of Thr-183, rendering the enzyme inactive. Under physiological conditions AMPK mainly exists in its inactive form in complex with ATP, which is much more abundant than AMP. Selectively inhibited by compound C (6-[4-(2-Piperidin-1-yl-ethoxy)-phenyl)]-3-pyridin-4-yl-pyyrazolo[1,5-a] pyrimidine. Activated by resveratrol, a natural polyphenol present in red wine, and S17834, a synthetic polyphenol. In terms of biological role, catalytic subunit of AMP-activated protein kinase (AMPK), an energy sensor protein kinase that plays a key role in regulating cellular energy metabolism. In response to reduction of intracellular ATP levels, AMPK activates energy-producing pathways and inhibits energy-consuming processes: inhibits protein, carbohydrate and lipid biosynthesis, as well as cell growth and proliferation. AMPK acts via direct phosphorylation of metabolic enzymes, and by longer-term effects via phosphorylation of transcription regulators. Regulates lipid synthesis by phosphorylating and inactivating lipid metabolic enzymes such as ACACA, ACACB, GYS1, HMGCR and LIPE; regulates fatty acid and cholesterol synthesis by phosphorylating acetyl-CoA carboxylase (ACACA and ACACB) and hormone-sensitive lipase (LIPE) enzymes, respectively. Promotes lipolysis of lipid droplets by mediating phosphorylation of isoform 1 of CHKA (CHKalpha2). Regulates insulin-signaling and glycolysis by phosphorylating IRS1, PFKFB2 and PFKFB3. AMPK stimulates glucose uptake in muscle by increasing the translocation of the glucose transporter SLC2A4/GLUT4 to the plasma membrane, possibly by mediating phosphorylation of TBC1D4/AS160. Regulates transcription and chromatin structure by phosphorylating transcription regulators involved in energy metabolism such as CRTC2/TORC2, FOXO3, histone H2B, HDAC5, MEF2C, MLXIPL/ChREBP, EP300, HNF4A, p53/TP53, SREBF1, SREBF2 and PPARGC1A. Acts as a key regulator of glucose homeostasis in liver by phosphorylating CRTC2/TORC2, leading to CRTC2/TORC2 sequestration in the cytoplasm. In response to stress, phosphorylates 'Ser-36' of histone H2B (H2BS36ph), leading to promote transcription. Acts as a key regulator of cell growth and proliferation by phosphorylating FNIP1, TSC2, RPTOR, WDR24 and ATG1/ULK1: in response to nutrient limitation, negatively regulates the mTORC1 complex by phosphorylating RPTOR component of the mTORC1 complex and by phosphorylating and activating TSC2. Also phosphorylates and inhibits GATOR2 subunit WDR24 in response to nutrient limitation, leading to suppress glucose-mediated mTORC1 activation. In response to energetic stress, phosphorylates FNIP1, inactivating the non-canonical mTORC1 signaling, thereby promoting nuclear translocation of TFEB and TFE3, and inducing transcription of lysosomal or autophagy genes. In response to nutrient limitation, promotes autophagy by phosphorylating and activating ATG1/ULK1. In that process, it also activates WDR45/WIPI4. Phosphorylates CASP6, thereby preventing its autoprocessing and subsequent activation. In response to nutrient limitation, phosphorylates transcription factor FOXO3 promoting FOXO3 mitochondrial import. Also acts as a regulator of cellular polarity by remodeling the actin cytoskeleton; probably by indirectly activating myosin. AMPK also acts as a regulator of circadian rhythm by mediating phosphorylation of CRY1, leading to destabilize it. May regulate the Wnt signaling pathway by phosphorylating CTNNB1, leading to stabilize it. Also has tau-protein kinase activity: in response to amyloid beta A4 protein (APP) exposure, activated by CAMKK2, leading to phosphorylation of MAPT/TAU; however the relevance of such data remains unclear in vivo. Also phosphorylates CFTR, EEF2K, KLC1, NOS3 and SLC12A1. Regulates hepatic lipogenesis. Activated via SIRT3, represses sterol regulatory element-binding protein (SREBP) transcriptional activities and ATP-consuming lipogenesis to restore cellular energy balance. Upon stress, regulates mitochondrial fragmentation through phosphorylation of MTFR1L. The chain is 5'-AMP-activated protein kinase catalytic subunit alpha-1 (Prkaa1) from Rattus norvegicus (Rat).